The following is a 106-amino-acid chain: Minor capsid protein VP2 (106 aa).

This sequence belongs to the vesivirus VP2 protein family. As to quaternary structure, homooligomer. The portal-like structure consists in 12 copies of VP2. Interacts with capsid protein VP1.

Its subcellular location is the virion. It localises to the host cytoplasm. In terms of biological role, minor structural protein that forms a portal-like structure at a unique three-fold axis of symmetry, following binding to the host receptor. The virion attaches to feline junctional adhesion molecule A (F11R). Once attached, the virion is endocytosed. Acidification of the endosome induces conformational change of capsid protein thereby injecting virus genomic RNA into host cytoplasm. The channel formed by VP2 may allow the delivery of the viral genome through the host endosomal membrane. In Feline calicivirus (strain CFI/68 FIV) (FCV), this protein is Minor capsid protein VP2.